The primary structure comprises 521 residues: Probable protein phosphatase 2C 16 (521 aa).

Positions 21–327 constitute a PPM-type phosphatase domain; that stretch reads KYVVSSMQGW…ENTTVILVQF (307 aa). Mn(2+)-binding residues include Asp-57, Gly-58, Gln-276, and Glu-318. Positions 354 to 431 are disordered; the sequence is AAPAGASDTS…ADADDGAPKP (78 aa).

The protein belongs to the PP2C family. Mg(2+) is required as a cofactor. It depends on Mn(2+) as a cofactor.

It carries out the reaction O-phospho-L-seryl-[protein] + H2O = L-seryl-[protein] + phosphate. The enzyme catalyses O-phospho-L-threonyl-[protein] + H2O = L-threonyl-[protein] + phosphate. The protein is Probable protein phosphatase 2C 16 of Oryza sativa subsp. japonica (Rice).